Reading from the N-terminus, the 227-residue chain is MGFGDLKSPAGLKVLKEFLADKSYIEGYVPSQADVAVFDALSAAPPADLFHALRWYNHIKSYEKQKSSLPGVKKALGNYGPVNIEDTTGSAAKETKEEDDDDIDLFGSDDEEESEDAKRVRDERLAQYEAKKSKKPTLIAKSSILLDVKPWDDETDMGKLEECLRSIQMDGLLWGSSKLVPVGYGIKKLQIQCVVEDDKVGTDVLEEKITAFEDFVQSMDVAAFNKI.

The 89-residue stretch at 2–90 folds into the GST C-terminal domain; that stretch reads GFGDLKSPAG…PVNIEDTTGS (89 aa). Residues 83–120 form a disordered region; that stretch reads NIEDTTGSAAKETKEEDDDDIDLFGSDDEEESEDAKRV. Residues 97-115 show a composition bias toward acidic residues; it reads EEDDDDIDLFGSDDEEESE. Residue Ser108 is modified to Phosphoserine; by CK2.

Belongs to the EF-1-beta/EF-1-delta family. As to quaternary structure, EF-1 is composed of 4 subunits: alpha, beta (alpha subunit of the eEF1B subcomplex), delta (beta subunit of the eEF1B subcomplex), and gamma (gamma subunit of the eEF1B subcomplex). Interacts with elongation factor EEF1A1. Post-translationally, phosphorylation affects the GDP/GTP exchange rate.

Catalytic subunit of the guanine nucleotide exchange factor (GEF) (eEF1B subcomplex) of the eukaryotic elongation factor 1 complex (eEF1). Stimulates the exchange of GDP for GTP on elongation factor 1A (eEF1A), probably by displacing GDP from the nucleotide binding pocket in eEF1A. The protein is Elongation factor 1-beta (eef1b) of Xenopus laevis (African clawed frog).